The sequence spans 229 residues: Peptidase E (229 aa).

Active-site charge relay system residues include Ser-120, Asp-135, and His-157.

It belongs to the peptidase S51 family.

Its subcellular location is the cytoplasm. It carries out the reaction Dipeptidase E catalyzes the hydrolysis of dipeptides Asp-|-Xaa. It does not act on peptides with N-terminal Glu, Asn or Gln, nor does it cleave isoaspartyl peptides.. Hydrolyzes dipeptides containing N-terminal aspartate residues. May play a role in allowing the cell to use peptide aspartate to spare carbon otherwise required for the synthesis of the aspartate family of amino acids. This is Peptidase E from Citrobacter koseri (strain ATCC BAA-895 / CDC 4225-83 / SGSC4696).